The following is a 601-amino-acid chain: Alpha-terpineol synthase, chloroplastic (601 aa).

The N-terminal 47 residues, 1–47, are a transit peptide targeting the chloroplast; sequence MSTISIHHVGILRNPLHSKSKRASINKPWSLSLPRSSSASRLVEPCR. Mn(2+)-binding residues include Asp-357 and Asp-361. Residues 357 to 361 carry the DDXXD motif motif; it reads DDVYD. 2 homodimerization regions span residues 363-369 and 435-471; these read YGTLDEL and EAEW…ELSL. Asp-499 and Glu-507 together coordinate Mn(2+).

This sequence belongs to the terpene synthase family. In terms of assembly, homodimer. It depends on Mn(2+) as a cofactor. The cofactor is Mg(2+).

The protein localises to the plastid. It is found in the chloroplast. The catalysed reaction is (2E)-geranyl diphosphate + H2O = (S)-alpha-terpineol + diphosphate. It catalyses the reaction (2E)-geranyl diphosphate + H2O = (R)-alpha-terpineol + diphosphate. It functions in the pathway secondary metabolite biosynthesis; terpenoid biosynthesis. In terms of biological role, involved in the biosynthesis of phenolic monoterpenes natural products. Monoterpene synthase which catalyzes the conversion of geranyl diphosphate (GPP) to alpha-terpineol (isomer is not determined). The protein is Alpha-terpineol synthase, chloroplastic of Thymus caespititius (Cretan thyme).